A 295-amino-acid polypeptide reads, in one-letter code: Myosin light chain kinase A (295 aa).

The Protein kinase domain maps to 8–265 (YEFKEELGRG…ATNALNHPWL (258 aa)). Residues 14-22 (LGRGAFSIV) and K37 each bind ATP. Catalysis depends on D130, which acts as the Proton acceptor. Residues T166 and T289 each carry the phosphothreonine modification. Positions 264 to 295 (WLKSNNSNNTIDTVKMKEYIVERQKTQTKLVN) are autoinhibitory domain.

Belongs to the protein kinase superfamily. CAMK Ser/Thr protein kinase family. CaMK subfamily. In terms of processing, autophosphorylated. Transiently phosphorylated on Thr-166 and Thr-289. This phosphorylation is gbpC-dependent.

It catalyses the reaction L-seryl-[myosin light chain] + ATP = O-phospho-L-seryl-[myosin light chain] + ADP + H(+). The catalysed reaction is L-threonyl-[myosin light chain] + ATP = O-phospho-L-threonyl-[myosin light chain] + ADP + H(+). With respect to regulation, possesses an autoinhibitory domain. Autophosphorylation appears to increase the enzymatic activity. Activation is gbdC-dependent. Does not have a calmodulin-binding domain. In terms of biological role, phosphorylates a specific serine in the N-terminus of a myosin light chain. Phosphorylates regulatory myosin light chain (mlcR) during chemotaxis. mlcR phosphorylation increases the motility and actin-activated ATPase activity of myosin, contributing to chemotaxis. In Dictyostelium discoideum (Social amoeba), this protein is Myosin light chain kinase A (mlkA).